We begin with the raw amino-acid sequence, 360 residues long: tRNA-specific 2-thiouridylase MnmA (360 aa).

Residues 9 to 16 (AMSGGVDS) and leucine 35 contribute to the ATP site. Cysteine 104 serves as the catalytic Nucleophile. A disulfide bridge connects residues cysteine 104 and cysteine 197. Residue glycine 128 participates in ATP binding. The segment at 147–149 (KDQ) is interaction with tRNA. Catalysis depends on cysteine 197, which acts as the Cysteine persulfide intermediate.

This sequence belongs to the MnmA/TRMU family.

Its subcellular location is the cytoplasm. It carries out the reaction S-sulfanyl-L-cysteinyl-[protein] + uridine(34) in tRNA + AH2 + ATP = 2-thiouridine(34) in tRNA + L-cysteinyl-[protein] + A + AMP + diphosphate + H(+). Functionally, catalyzes the 2-thiolation of uridine at the wobble position (U34) of tRNA, leading to the formation of s(2)U34. The chain is tRNA-specific 2-thiouridylase MnmA from Salinispora arenicola (strain CNS-205).